The primary structure comprises 416 residues: Bifunctional protein GlmU (416 aa).

A pyrophosphorylase region spans residues Met1 to Arg229. UDP-N-acetyl-alpha-D-glucosamine is bound by residues Leu8–Gly11, Lys22, Gln72, and Gly77–Thr78. Asp102 serves as a coordination point for Mg(2+). Residues Gly139, Glu154, Asn169, and Asn227 each contribute to the UDP-N-acetyl-alpha-D-glucosamine site. Asn227 serves as a coordination point for Mg(2+). A linker region spans residues Val230–Asn250. Residues Gly251–Arg416 are N-acetyltransferase. UDP-N-acetyl-alpha-D-glucosamine-binding residues include Arg332 and Lys350. The active-site Proton acceptor is the His362. Residues Tyr365 and Asn376 each contribute to the UDP-N-acetyl-alpha-D-glucosamine site. Residues Ala379 and Asn385–Tyr386 contribute to the acetyl-CoA site.

In the N-terminal section; belongs to the N-acetylglucosamine-1-phosphate uridyltransferase family. The protein in the C-terminal section; belongs to the transferase hexapeptide repeat family. As to quaternary structure, homotrimer. Mg(2+) is required as a cofactor.

It localises to the cytoplasm. The catalysed reaction is alpha-D-glucosamine 1-phosphate + acetyl-CoA = N-acetyl-alpha-D-glucosamine 1-phosphate + CoA + H(+). The enzyme catalyses N-acetyl-alpha-D-glucosamine 1-phosphate + UTP + H(+) = UDP-N-acetyl-alpha-D-glucosamine + diphosphate. Its pathway is nucleotide-sugar biosynthesis; UDP-N-acetyl-alpha-D-glucosamine biosynthesis; N-acetyl-alpha-D-glucosamine 1-phosphate from alpha-D-glucosamine 6-phosphate (route II): step 2/2. It functions in the pathway nucleotide-sugar biosynthesis; UDP-N-acetyl-alpha-D-glucosamine biosynthesis; UDP-N-acetyl-alpha-D-glucosamine from N-acetyl-alpha-D-glucosamine 1-phosphate: step 1/1. The protein operates within bacterial outer membrane biogenesis; LPS lipid A biosynthesis. Its function is as follows. Catalyzes the last two sequential reactions in the de novo biosynthetic pathway for UDP-N-acetylglucosamine (UDP-GlcNAc). The C-terminal domain catalyzes the transfer of acetyl group from acetyl coenzyme A to glucosamine-1-phosphate (GlcN-1-P) to produce N-acetylglucosamine-1-phosphate (GlcNAc-1-P), which is converted into UDP-GlcNAc by the transfer of uridine 5-monophosphate (from uridine 5-triphosphate), a reaction catalyzed by the N-terminal domain. The chain is Bifunctional protein GlmU from Streptococcus pyogenes serotype M12 (strain MGAS2096).